Here is a 1174-residue protein sequence, read N- to C-terminus: Probable pyruvate-flavodoxin oxidoreductase (1174 aa).

2 4Fe-4S ferredoxin-type domains span residues 680 to 709 and 736 to 765; these read EIPI…AKVV and YVLQ…NPEI. Residues cysteine 689, cysteine 692, cysteine 695, cysteine 699, cysteine 745, cysteine 748, cysteine 751, cysteine 755, cysteine 819, cysteine 822, cysteine 847, and cysteine 1071 each coordinate [4Fe-4S] cluster.

Belongs to the pyruvate:ferredoxin/flavodoxin oxidoreductase family. [4Fe-4S] cluster is required as a cofactor.

It catalyses the reaction oxidized [flavodoxin] + pyruvate + CoA + 2 H(+) = reduced [flavodoxin] + acetyl-CoA + CO2. Functionally, oxidoreductase required for the transfer of electrons from pyruvate to flavodoxin. This Escherichia coli (strain K12) protein is Probable pyruvate-flavodoxin oxidoreductase (ydbK).